A 242-amino-acid chain; its full sequence is 1-(5-phosphoribosyl)-5-[(5-phosphoribosylamino)methylideneamino] imidazole-4-carboxamide isomerase (242 aa).

The active-site Proton acceptor is the Asp8. Catalysis depends on Asp129, which acts as the Proton donor.

This sequence belongs to the HisA/HisF family.

Its subcellular location is the cytoplasm. It catalyses the reaction 1-(5-phospho-beta-D-ribosyl)-5-[(5-phospho-beta-D-ribosylamino)methylideneamino]imidazole-4-carboxamide = 5-[(5-phospho-1-deoxy-D-ribulos-1-ylimino)methylamino]-1-(5-phospho-beta-D-ribosyl)imidazole-4-carboxamide. It functions in the pathway amino-acid biosynthesis; L-histidine biosynthesis; L-histidine from 5-phospho-alpha-D-ribose 1-diphosphate: step 4/9. This chain is 1-(5-phosphoribosyl)-5-[(5-phosphoribosylamino)methylideneamino] imidazole-4-carboxamide isomerase, found in Erythrobacter litoralis (strain HTCC2594).